Consider the following 194-residue polypeptide: Dephospho-CoA kinase (194 aa).

In terms of domain architecture, DPCK spans 4-194 (VIGLTGSIGM…VKEILQKLGA (191 aa)). 12 to 17 (GMGKTT) lines the ATP pocket.

Belongs to the CoaE family.

Its subcellular location is the cytoplasm. The catalysed reaction is 3'-dephospho-CoA + ATP = ADP + CoA + H(+). It functions in the pathway cofactor biosynthesis; coenzyme A biosynthesis; CoA from (R)-pantothenate: step 5/5. Its function is as follows. Catalyzes the phosphorylation of the 3'-hydroxyl group of dephosphocoenzyme A to form coenzyme A. The polypeptide is Dephospho-CoA kinase (Agrobacterium fabrum (strain C58 / ATCC 33970) (Agrobacterium tumefaciens (strain C58))).